A 517-amino-acid chain; its full sequence is Glycosyltransferase family 92 protein F55C10.4 (517 aa).

A helical transmembrane segment spans residues 9–31; the sequence is FLKYFIIFTFFCVTFCFLKLCLG. The 299-residue stretch at 156–454 folds into the GT92 domain; that stretch reads KPVIFCVSPQ…FKCYNESFYH (299 aa).

Belongs to the glycosyltransferase 92 family.

It localises to the membrane. This chain is Glycosyltransferase family 92 protein F55C10.4, found in Caenorhabditis elegans.